A 240-amino-acid polypeptide reads, in one-letter code: Pyridoxine 5'-phosphate synthase (240 aa).

Asparagine 6 is a 3-amino-2-oxopropyl phosphate binding site. 8–9 contributes to the 1-deoxy-D-xylulose 5-phosphate binding site; it reads DH. 3-amino-2-oxopropyl phosphate is bound at residue arginine 17. Histidine 42 functions as the Proton acceptor in the catalytic mechanism. Arginine 44 and histidine 49 together coordinate 1-deoxy-D-xylulose 5-phosphate. The active-site Proton acceptor is glutamate 69. Threonine 99 is a 1-deoxy-D-xylulose 5-phosphate binding site. Catalysis depends on histidine 190, which acts as the Proton donor. 3-amino-2-oxopropyl phosphate is bound by residues glycine 191 and 212-213; that span reads GH.

The protein belongs to the PNP synthase family. In terms of assembly, homooctamer; tetramer of dimers.

The protein resides in the cytoplasm. The enzyme catalyses 3-amino-2-oxopropyl phosphate + 1-deoxy-D-xylulose 5-phosphate = pyridoxine 5'-phosphate + phosphate + 2 H2O + H(+). The protein operates within cofactor biosynthesis; pyridoxine 5'-phosphate biosynthesis; pyridoxine 5'-phosphate from D-erythrose 4-phosphate: step 5/5. Its function is as follows. Catalyzes the complicated ring closure reaction between the two acyclic compounds 1-deoxy-D-xylulose-5-phosphate (DXP) and 3-amino-2-oxopropyl phosphate (1-amino-acetone-3-phosphate or AAP) to form pyridoxine 5'-phosphate (PNP) and inorganic phosphate. This is Pyridoxine 5'-phosphate synthase from Pseudomonas putida (strain ATCC 700007 / DSM 6899 / JCM 31910 / BCRC 17059 / LMG 24140 / F1).